A 291-amino-acid chain; its full sequence is N-acetylmannosamine kinase (291 aa).

ATP is bound by residues 5–12 (AIDIGGTK) and 132–139 (GVGGGVVS). Positions 156, 166, 168, and 173 each coordinate Zn(2+).

This sequence belongs to the ROK (NagC/XylR) family. NanK subfamily. In terms of assembly, homodimer.

It catalyses the reaction an N-acyl-D-mannosamine + ATP = an N-acyl-D-mannosamine 6-phosphate + ADP + H(+). The protein operates within amino-sugar metabolism; N-acetylneuraminate degradation; D-fructose 6-phosphate from N-acetylneuraminate: step 2/5. Functionally, catalyzes the phosphorylation of N-acetylmannosamine (ManNAc) to ManNAc-6-P. This Escherichia coli O157:H7 protein is N-acetylmannosamine kinase.